The primary structure comprises 1019 residues: Vacuolar membrane protease (1019 aa).

The Cytoplasmic portion of the chain corresponds to 1 to 69; sequence MFLEINFYST…DRIPTVVGFR (69 aa). A helical membrane pass occupies residues 70–90; it reads VIPTTVLVLLTYLTIFTLVIV. The Vacuolar segment spans residues 91–404; it reads TDWLPEPPKN…AELVIFYLND (314 aa). The N-linked (GlcNAc...) asparagine glycan is linked to asparagine 158. Positions 195 and 207 each coordinate Zn(2+). Glutamate 239 acts as the Proton acceptor in catalysis. Glutamate 240 serves as a coordination point for Zn(2+). Asparagine 256 carries an N-linked (GlcNAc...) asparagine glycan. Zn(2+) is bound by residues glutamate 265 and histidine 341. Residues 405–425 form a helical membrane-spanning segment; sequence LLIYNVVSLVVGPISLIFFVV. The Cytoplasmic portion of the chain corresponds to 426-466; that stretch reads CEYVLRNERARQPNGHPVSRPSVLEWLKQRSWLRALWRRSK. A helical membrane pass occupies residues 467-487; it reads FWIALVITIALQALLVWGYLA. Residues 488-497 are Vacuolar-facing; the sequence is FNSFTVYSSP. The helical transmembrane segment at 498–518 threads the bilayer; that stretch reads YLVLISFFSLAYLSLVIPLTF. Residues 519-539 are Cytoplasmic-facing; sequence TFNQTQSPTAKYIAPEREKHT. A helical membrane pass occupies residues 540–560; it reads LLIQVYIFTWILLLFSTIAVA. Over 561-565 the chain is Vacuolar; the sequence is RAQVG. A helical membrane pass occupies residues 566 to 586; that stretch reads GLYFVTAWNTGVWIACLLAAV. The Cytoplasmic portion of the chain corresponds to 587–651; that stretch reads EGMMLPVPQG…ASLRKPQEGG (65 aa). The disordered stretch occupies residues 603-634; it reads HSAHHHHHHEHEEDQDADDDDREQRQPPTEAT. A helical transmembrane segment spans residues 652–672; sequence VVGWWIVHLLLTIPAPVLLIA. Residues 673–692 lie on the Vacuolar side of the membrane; it reads QMGSLLLDSLPQTLADGSPA. A helical transmembrane segment spans residues 693–713; it reads YVVYAAASLTAVLLAVPLTPF. Residues 714–719 lie on the Cytoplasmic side of the membrane; the sequence is SGKLHR. A helical membrane pass occupies residues 720 to 740; it reads GLFFLFFLSFLIVTAYLWLAF. The Vacuolar segment spans residues 741–1019; that stretch reads PFSSADPLKV…LVEAWSPFSV (279 aa). A glycan (N-linked (GlcNAc...) asparagine) is linked at asparagine 774.

The protein belongs to the peptidase M28 family. Zn(2+) serves as cofactor.

The protein localises to the vacuole membrane. May be involved in vacuolar sorting and osmoregulation. The protein is Vacuolar membrane protease of Laccaria bicolor (strain S238N-H82 / ATCC MYA-4686) (Bicoloured deceiver).